The following is a 1029-amino-acid chain: Protein translocase subunit SecA (1029 aa).

ATP is bound by residues Q143, 161-165 (GEGKT), and D661. Positions 953 to 1029 (EQEQKKSQVQ…GKKYKNCCGK (77 aa)) are disordered. 2 stretches are compositionally biased toward basic and acidic residues: residues 966 to 975 (LVARHEKAET) and 984 to 996 (PEGR…ENGK). 4 residues coordinate Zn(2+): C1015, C1017, C1026, and C1027.

It belongs to the SecA family. As to quaternary structure, monomer and homodimer. Part of the essential Sec protein translocation apparatus which comprises SecA, SecYEG and auxiliary proteins SecDF. Other proteins may also be involved. The cofactor is Zn(2+).

It is found in the cell inner membrane. The protein localises to the cytoplasm. It carries out the reaction ATP + H2O + cellular proteinSide 1 = ADP + phosphate + cellular proteinSide 2.. In terms of biological role, part of the Sec protein translocase complex. Interacts with the SecYEG preprotein conducting channel. Has a central role in coupling the hydrolysis of ATP to the transfer of proteins into and across the cell membrane, serving as an ATP-driven molecular motor driving the stepwise translocation of polypeptide chains across the membrane. This Chlorobium phaeobacteroides (strain BS1) protein is Protein translocase subunit SecA.